The primary structure comprises 206 residues: Testis-expressed protein 38 (206 aa).

Residues 15–35 form a helical membrane-spanning segment; sequence VSLYFGILGLCSVITGGCIIF.

The protein localises to the membrane. This Homo sapiens (Human) protein is Testis-expressed protein 38 (TEX38).